The following is a 286-amino-acid chain: Polyamine aminopropyltransferase (286 aa).

The region spanning T5–D238 is the PABS domain. Q33 serves as a coordination point for S-methyl-5'-thioadenosine. 2 residues coordinate spermidine: H64 and D88. Residues E108 and D140–G141 contribute to the S-methyl-5'-thioadenosine site. The active-site Proton acceptor is D158. D158–D161 lines the spermidine pocket. An S-methyl-5'-thioadenosine-binding site is contributed by P165.

It belongs to the spermidine/spermine synthase family. Homodimer or homotetramer.

The protein localises to the cytoplasm. It carries out the reaction S-adenosyl 3-(methylsulfanyl)propylamine + putrescine = S-methyl-5'-thioadenosine + spermidine + H(+). It participates in amine and polyamine biosynthesis; spermidine biosynthesis; spermidine from putrescine: step 1/1. In terms of biological role, catalyzes the irreversible transfer of a propylamine group from the amino donor S-adenosylmethioninamine (decarboxy-AdoMet) to putrescine (1,4-diaminobutane) to yield spermidine. The chain is Polyamine aminopropyltransferase from Salmonella newport (strain SL254).